A 181-amino-acid chain; its full sequence is Ubiquitin-like protein 4B (181 aa).

The Ubiquitin-like domain occupies 1–76 (MWLTVKLLLG…LNVIIRPLEK (76 aa)). Residues 139–181 (PEGKHSGATGSTRESKGDMEPRRNMKCNLAHKDGFKREKSPGK) form a disordered region. Composition is skewed to basic and acidic residues over residues 151–161 (RESKGDMEPRR) and 168–181 (AHKD…SPGK).

It is found in the cytoplasm. The chain is Ubiquitin-like protein 4B (UBL4B) from Monodelphis domestica (Gray short-tailed opossum).